The chain runs to 557 residues: Membrane protein insertase YidC (557 aa).

3 consecutive transmembrane segments (helical) span residues 371-391 (WGWSIILLTILIKLVFFPLSA), 437-457 (LGGCLPVVIQIPVFISLYWVL), and 515-535 (PIVFSVMFFFFPAGLVLYWVV).

The protein belongs to the OXA1/ALB3/YidC family. Type 1 subfamily. As to quaternary structure, interacts with the Sec translocase complex via SecD. Specifically interacts with transmembrane segments of nascent integral membrane proteins during membrane integration.

The protein localises to the cell inner membrane. In terms of biological role, required for the insertion and/or proper folding and/or complex formation of integral membrane proteins into the membrane. Involved in integration of membrane proteins that insert both dependently and independently of the Sec translocase complex, as well as at least some lipoproteins. Aids folding of multispanning membrane proteins. The chain is Membrane protein insertase YidC from Polynucleobacter necessarius subsp. necessarius (strain STIR1).